Here is a 185-residue protein sequence, read N- to C-terminus: Hypoxanthine/guanine phosphoribosyltransferase (185 aa).

The protein belongs to the purine/pyrimidine phosphoribosyltransferase family. Archaeal HPRT subfamily. As to quaternary structure, homodimer.

The protein localises to the cytoplasm. It catalyses the reaction IMP + diphosphate = hypoxanthine + 5-phospho-alpha-D-ribose 1-diphosphate. It carries out the reaction GMP + diphosphate = guanine + 5-phospho-alpha-D-ribose 1-diphosphate. It functions in the pathway purine metabolism; IMP biosynthesis via salvage pathway; IMP from hypoxanthine: step 1/1. Its function is as follows. Catalyzes a salvage reaction resulting in the formation of IMP that is energically less costly than de novo synthesis. The chain is Hypoxanthine/guanine phosphoribosyltransferase from Aciduliprofundum boonei (strain DSM 19572 / T469).